The primary structure comprises 335 residues: Fimbrial adhesin PapGIII (335 aa).

Residues 1 to 21 form the signal peptide; sequence MKKWLPAFLFLSLSGCNDALA.

This sequence belongs to the adhesin PapG family.

Its subcellular location is the secreted. It is found in the fimbrium. In terms of biological role, tip adhesin component of type P pili that binds preferentially to Gal-alpha(1-4)-Gal-containing glycolipids such as globoside. This tip is common in E.coli strains that cause human cystitis, but rare in pyelonephritic isolates. The sequence is that of Fimbrial adhesin PapGIII from Escherichia coli.